Reading from the N-terminus, the 326-residue chain is Alkanal monooxygenase beta chain (326 aa).

The protein belongs to the bacterial luciferase oxidoreductase family. As to quaternary structure, heterodimer of an alpha and a beta chain.

The enzyme catalyses a long-chain fatty aldehyde + FMNH2 + O2 = a long-chain fatty acid + hnu + FMN + H2O + 2 H(+). Its function is as follows. Light-emitting reaction in luminous bacteria. The specific role of the beta subunit is unknown, but it is absolutely required for bioluminescence activity. This chain is Alkanal monooxygenase beta chain (luxB), found in Aliivibrio fischeri (Vibrio fischeri).